We begin with the raw amino-acid sequence, 90 residues long: Putative sodium channel toxin Ts28 (90 aa).

Residues 1–23 form the signal peptide; the sequence is MKISLVTWLITALCLMEIEEIDG. Positions 26–86 constitute an LCN-type CS-alpha/beta domain; it reads PGNYPVDFQG…FWDVMKKQCD (61 aa). Intrachain disulfides connect Cys40-Cys60, Cys46-Cys65, and Cys50-Cys67.

The protein belongs to the long (3 C-C) scorpion toxin superfamily. As to quaternary structure, monomer (edited version) and heterodimer (non-edited version) of this alpha chain and a beta chain (AC P0CI43). In terms of tissue distribution, expressed by the venom gland.

The protein localises to the secreted. In terms of biological role, the edited BmKBTx-like may modulate voltage-gated sodium channels (Nav). Its function is as follows. The non-edited form is able to form a heterodimer. In orthologs, a heterodimer with LVP beta-chain induces lipolysis in rat adipocytes, which is mediated through the beta-2 adrenergic receptor pathway (ADRB2). Since no LVP beta-chains have been identified in the venom of this scorpion, it is possible that this protein is not involved in a lipolysis process. This chain is Putative sodium channel toxin Ts28, found in Tityus serrulatus (Brazilian scorpion).